The sequence spans 273 residues: MVNTCTYLPLSGKVALVTGGGRGIGAGIALELARRGASVAINYGHSAKSAQEVVEAIQAIGRQAVAIQADLTCVPNIESLIQEVVRHFGRLDIVVSNSGMEKFKPLEETTLEDFNEVFNLNTRAQMFVARYAYDHIQPGGRVILMSSIAAGLGVPGHALYAGSKAAIEGFTRCLAADFGRKGCTVNAIAPAGVKSDMWRENAWRYAPGCDKSSSLEEIETALASGSPLKRCGVPEDIGKVVSFLASPDAEWVNGEFFSPPPCKGPLPGGDLEC.

Positions 24, 70, 97, and 130 each coordinate NADP(+). Active-site proton donor residues include serine 146 and serine 147. Tyrosine 160, lysine 164, valine 193, and serine 195 together coordinate NADP(+). Tyrosine 160 serves as the catalytic Proton acceptor. The active-site Lowers pKa of active site Tyr is lysine 164.

This sequence belongs to the short-chain dehydrogenases/reductases (SDR) family.

The protein resides in the endosome. It functions in the pathway pigment biosynthesis; melanin biosynthesis. Its activity is regulated as follows. Tricyclazole and pyroquilon inhibit arp2 hydroxynaphtalene reductase activity. Its function is as follows. Hydroxynaphthalene reductase; part of the gene cluster that mediates the biosynthesis of dihydroxynaphthalene (DHN)-melanin, a bluish-green pigment and a structural component of the conidial wall. The first step of the pathway is the production of the heptaketide naphtopyrone YWA1 by the polyketide synthase alb1 though condensation of acetyl-CoA with malonyl-CoA. The naphtopyrone YWA1 is then converted to the pentaketide 1,3,6,8-tetrahydroxynaphthalene (1,3,6,8-THN) by the heptaketide hydrolyase ayg1 though chain-length shortening. 1,3,6,8-THN is substrate of the hydroxynaphthalene reductase arp2 to yield scytalone. The scytalone dehydratase arp1 then reduces scytalone to 1,3,8-THN. 1,3,8-THN is also substrate of the hydroxynaphthalene reductase arp2 to yield vermelone. Vermelone is further converted by the multicopper oxidase abr1 to 1,8-DHN. Finally the laccase abr2 transforms 1,8-DHN to DHN-melanin. DHN-melanin biosynthesis appears to be initiated in endosomes where early enzymes (abl1, ayg1, arp1 and arp2) localize, with exocytosis leading to melanin deposition on the cell surface where late enzymes (abr1 and abr2) localize. DHN-melanin is an important structural component of the outer cell wall and is required for the presence of conidial surface hydrophobins. DHN-melanin also plays a crucial role in fungal virulence, including a protective role against the host's immune defenses. DHN-melanin also protects conidia against amoeba predation. This Aspergillus fumigatus (strain ATCC MYA-4609 / CBS 101355 / FGSC A1100 / Af293) (Neosartorya fumigata) protein is Hydroxynaphthalene reductase arp2.